Consider the following 412-residue polypeptide: AA9 family lytic polysaccharide monooxygenase A (412 aa).

The first 20 residues, 1–20, serve as a signal peptide directing secretion; that stretch reads MKTTTYSLLALAAASKLASA. Cu(2+)-binding residues include His-21 and His-103. An intrachain disulfide couples Cys-63 to Cys-186. Asn-151 carries an N-linked (GlcNAc...) asparagine glycan. His-172 is an O2 binding site. Tyr-183 is a binding site for Cu(2+). 2 N-linked (GlcNAc...) asparagine glycosylation sites follow: Asn-334 and Asn-385. A CBM1 domain is found at 373-409; sequence GVAKMYERCGGINHTGPTTCESGSVCKKWNPYYYQCV.

It belongs to the polysaccharide monooxygenase AA9 family. Cu(2+) is required as a cofactor.

The protein localises to the secreted. The catalysed reaction is [(1-&gt;4)-beta-D-glucosyl]n+m + reduced acceptor + O2 = 4-dehydro-beta-D-glucosyl-[(1-&gt;4)-beta-D-glucosyl]n-1 + [(1-&gt;4)-beta-D-glucosyl]m + acceptor + H2O.. Its function is as follows. Lytic polysaccharide monooxygenase (LPMO) that depolymerizes crystalline and amorphous polysaccharides via the oxidation of scissile alpha- or beta-(1-4)-glycosidic bonds, yielding C4 oxidation products. Catalysis by LPMOs requires the reduction of the active-site copper from Cu(II) to Cu(I) by a reducing agent and H(2)O(2) or O(2) as a cosubstrate. The chain is AA9 family lytic polysaccharide monooxygenase A (eglD) from Aspergillus niger (strain ATCC MYA-4892 / CBS 513.88 / FGSC A1513).